Reading from the N-terminus, the 368-residue chain is Protein ALTERED XYLOGLUCAN 9 (368 aa).

The Cytoplasmic portion of the chain corresponds to 1–32 (MLGAIHLGVLAACFVLFVPMAMAGWHLSRNKM). A helical membrane pass occupies residues 33-53 (LFFSGALFISLAVCVHLTPYF). Topologically, residues 54 to 368 (PSVSDIVASV…ALLIESHQSL (315 aa)) are lumenal. Residues Asn-99, Asn-137, and Asn-235 are each glycosylated (N-linked (GlcNAc...) asparagine).

The protein resides in the golgi apparatus membrane. Component of the plant cell wall polysaccharide acetylation pathway. Does not directly catalyze O-acetylation of xyloglucan but exhibits weak acetylesterase activity in vitro. This chain is Protein ALTERED XYLOGLUCAN 9, found in Arabidopsis thaliana (Mouse-ear cress).